Consider the following 231-residue polypeptide: Probable glutathione S-transferase (231 aa).

The region spanning 4–96 is the GST N-terminal domain; it reads PNFELYGYFR…YLEEALPTNA (93 aa). Glutathione contacts are provided by residues S14, Q43, V57, 80-81, Q124, and 128-130; these read QS and NLK. Positions 105 to 227 constitute a GST C-terminal domain; it reads NPVARAHVRT…HWQKQEDTPE (123 aa).

It belongs to the GST superfamily. Zeta family. Homodimer.

It catalyses the reaction RX + glutathione = an S-substituted glutathione + a halide anion + H(+). In terms of biological role, probable glutathione S-transferase. The polypeptide is Probable glutathione S-transferase (Coccidioides immitis (strain RS) (Valley fever fungus)).